The sequence spans 138 residues: Cofilin (138 aa).

An ADF-H domain is found at 2 to 136 (SSGVQPTQEC…TKDALFEKAT (135 aa)).

Belongs to the actin-binding proteins ADF family.

It is found in the cytoplasm. The protein localises to the cytoskeleton. It localises to the nucleus matrix. In terms of biological role, controls reversibly actin polymerization and depolymerization in a pH-sensitive manner. It has the ability to bind G- and F-actin in a 1:1 ratio of cofilin to actin. Binding to F-actin is regulated by tropomyosin. It is the major component of intranuclear and cytoplasmic actin rods. Required for accumulation of actin at the cell division site via depolymerizing actin at the cell ends. In association with myosin II has a role in the assembly of the contractile ring via severing actin filaments. Involved in the maintenance of the contractile ring once formed. In association with profilin and capping protein, has a role in the mitotic reorganization of the actin cytoskeleton. The sequence is that of Cofilin (COF1) from Cryptococcus neoformans var. neoformans serotype D (strain B-3501A) (Filobasidiella neoformans).